Reading from the N-terminus, the 133-residue chain is Small ribosomal subunit protein eS8 (133 aa).

The disordered stretch occupies residues 1-22 (MGFYQGPDNRKITGGLKGKHRD).

It belongs to the eukaryotic ribosomal protein eS8 family. In terms of assembly, part of the 30S ribosomal subunit.

This Saccharolobus islandicus (strain Y.N.15.51 / Yellowstone #2) (Sulfolobus islandicus) protein is Small ribosomal subunit protein eS8.